Consider the following 231-residue polypeptide: NADH-ubiquinone oxidoreductase chain 4 (231 aa).

The next 7 membrane-spanning stretches (helical) occupy residues 1–21 (PIAGSMVLAAILLKLGGYGII), 34–54 (LFLPFIVLALWGAILANLTCL), 63–85 (IAYSSISHMGLVVAAIIIQTPWG), 89–111 (AMALMIAHGFTSSALFCLANTTY), 128–148 (ILPMATTWWLVTNLMNIAIPP), 156–176 (LLIMSALFNWCPTTIIMLGLS), and 211–231 (LLIALHLAPLLMISLKPELVI).

It belongs to the complex I subunit 4 family.

The protein localises to the mitochondrion membrane. The enzyme catalyses a ubiquinone + NADH + 5 H(+)(in) = a ubiquinol + NAD(+) + 4 H(+)(out). Its function is as follows. Core subunit of the mitochondrial membrane respiratory chain NADH dehydrogenase (Complex I) that is believed to belong to the minimal assembly required for catalysis. Complex I functions in the transfer of electrons from NADH to the respiratory chain. The immediate electron acceptor for the enzyme is believed to be ubiquinone. In Crotalus adamanteus (Eastern diamondback rattlesnake), this protein is NADH-ubiquinone oxidoreductase chain 4 (MT-ND4).